Consider the following 483-residue polypeptide: Protein nucleotidyltransferase YdiU (483 aa).

Residues Gly-100, Gly-102, Arg-103, Lys-123, Asp-135, Gly-136, Arg-189, and Arg-196 each coordinate ATP. The Proton acceptor role is filled by Asp-265. Mg(2+)-binding residues include Asn-266 and Asp-275. Asp-275 contributes to the ATP binding site.

Belongs to the SELO family. The cofactor is Mg(2+). Mn(2+) is required as a cofactor.

It carries out the reaction L-seryl-[protein] + ATP = 3-O-(5'-adenylyl)-L-seryl-[protein] + diphosphate. It catalyses the reaction L-threonyl-[protein] + ATP = 3-O-(5'-adenylyl)-L-threonyl-[protein] + diphosphate. The catalysed reaction is L-tyrosyl-[protein] + ATP = O-(5'-adenylyl)-L-tyrosyl-[protein] + diphosphate. The enzyme catalyses L-histidyl-[protein] + UTP = N(tele)-(5'-uridylyl)-L-histidyl-[protein] + diphosphate. It carries out the reaction L-seryl-[protein] + UTP = O-(5'-uridylyl)-L-seryl-[protein] + diphosphate. It catalyses the reaction L-tyrosyl-[protein] + UTP = O-(5'-uridylyl)-L-tyrosyl-[protein] + diphosphate. Functionally, nucleotidyltransferase involved in the post-translational modification of proteins. It can catalyze the addition of adenosine monophosphate (AMP) or uridine monophosphate (UMP) to a protein, resulting in modifications known as AMPylation and UMPylation. This Gloeobacter violaceus (strain ATCC 29082 / PCC 7421) protein is Protein nucleotidyltransferase YdiU.